The following is a 1129-amino-acid chain: Stress response protein nst1 (1129 aa).

Disordered regions lie at residues 1 to 136, 229 to 307, 361 to 413, 453 to 879, and 903 to 937; these read MAPS…HLGT, NQGS…ETRA, NIAA…EQRM, MEEQ…TQRD, and NLSQSLPGATAPGSLPGPTRASFGAPSLFPDPLAS. Residues 14-54 are compositionally biased toward polar residues; that stretch reads ATTSDQMSTASSRPTNGTAHTSAETAYPSSMTDSKPTQSGP. Basic and acidic residues predominate over residues 72 to 85; the sequence is SEQHMDHSNPDGHP. Positions 89-101 are enriched in basic residues; sequence SGRKKKKKAKKGR. Composition is skewed to polar residues over residues 103 to 122 and 254 to 263; these read GSQTLGDESSTPLSTPSVSM and GQHTRTQGQF. 2 stretches are compositionally biased toward acidic residues: residues 274-304 and 379-408; these read TEDEEDLEEDYDDEEEDDDEPYSDDEFEDEE and DEEDYDDEEDEEYDSQEEDDYDEDEMDTMT. Residues 441–608 adopt a coiled-coil conformation; it reads AEQRQQKLIE…EDQKKANQET (168 aa). Basic and acidic residues-rich tracts occupy residues 453-473 and 482-613; these read MEEQTRTEQKNAKKAREAEKR and QAKE…ETKR. A compositionally biased stretch (low complexity) spans 626–673; it reads LQPQGSSSHLQSPHLQSASPAVPKAPTPAKARQPSQQGSHGSSPRSQQ. Over residues 674–685 the composition is skewed to polar residues; the sequence is ASTEPFHTSISP. Low complexity predominate over residues 687–701; sequence SMAPSQSSGASSVAS. The span at 718-728 shows a compositional bias: polar residues; it reads TPLSPLGSVNR. Residues 741 to 754 show a composition bias toward pro residues; the sequence is SNPPGLPGMVPRPP. Residues 865-875 show a composition bias toward polar residues; that stretch reads TQQEQSDANRA.

It belongs to the NST1 family.

The protein localises to the cytoplasm. In terms of biological role, may act as a negative regulator of salt tolerance. This chain is Stress response protein nst1 (nst1), found in Aspergillus terreus (strain NIH 2624 / FGSC A1156).